The sequence spans 657 residues: MIESQEPVTFEDVAVDFTQEEWQQLNPAQKTLHRDVMLETYNHLVSVGCSGIKPDVIFKLEHGKDPWIIESELSRWIYPDRVKGLESSQQIISGELLFQREILERAPKDNSLYSVLKIWHIDNQMDRYQGNQDRVLRQVTVISRETLTDEMGSKYSAFGKMFNRCTDLAPLSQKFHKFDSCENSLKSNSDLLNYNRSYARKNPTKRFRCGRPPKYNASCSVPEKEGFIHTGMEPYGDSQCEKVLSHKQAHVQYKKFQAREKPNVCSMCGKAFIKKSQLIIHQRIHTGEKPYVCGDCRKAFSEKSHLIVHQRIHTGEKPYECTKYGRAFSRKSPFTVHQRVHTGEKPYECFECPKAFSQKSHLIIHQRVHTREKPFECSECRKAFCEMSHLFIHQITHTGKKPYECTECGKTFPRKTQLIIHQRTHTGEKPYKCGECGKTFCQQSHLIGHQRIHTGEKPYVCTDCGKAFSQKSHLTGHQRLHTGEKPYMCTECGKSFSQKSPLIIHQRIHTGEKPYQCGECGKTFSQKSLLIIHLRVHTGEKPYECTECGRAFSLKSHLILHQRGHTGEKPYECSECGKAFCGKSPLIIHQKTHPREKTPECAESGMTFFWKSQMITYQRRHTGEKPSRCSDCGKAFCQHVYFTGHQNPYRKDTLYIC.

Residues 8–79 (VTFEDVAVDF…ESELSRWIYP (72 aa)) form the KRAB domain. 2 consecutive C2H2-type zinc fingers follow at residues 263 to 285 (NVCS…QRIH) and 291 to 313 (YVCG…QRIH). Residues 319-341 (YECTKYGRAFSRKSPFTVHQRVH) form a C2H2-type 3; degenerate zinc finger. C2H2-type zinc fingers lie at residues 347–369 (YECF…QRVH), 375–397 (FECS…QITH), 403–425 (YECT…QRTH), 431–453 (YKCG…QRIH), 459–481 (YVCT…QRLH), 487–509 (YMCT…QRIH), 515–537 (YQCG…LRVH), 543–565 (YECT…QRGH), and 571–593 (YECS…QKTH). The C2H2-type 13; degenerate zinc-finger motif lies at 599 to 621 (PECAESGMTFFWKSQMITYQRRH). A C2H2-type 14; degenerate zinc finger spans residues 627–649 (SRCSDCGKAFCQHVYFTGHQNPY).

Belongs to the krueppel C2H2-type zinc-finger protein family.

It is found in the nucleus. Its function is as follows. May be involved in transcriptional regulation. The chain is Zinc finger protein 630 (ZNF630) from Homo sapiens (Human).